Consider the following 283-residue polypeptide: MEMO1 family protein MK0963 (283 aa).

This sequence belongs to the MEMO1 family.

The polypeptide is MEMO1 family protein MK0963 (Methanopyrus kandleri (strain AV19 / DSM 6324 / JCM 9639 / NBRC 100938)).